Here is a 346-residue protein sequence, read N- to C-terminus: [LysW]-lysine/[LysW]-ornithine hydrolase (346 aa).

H68 provides a ligand contact to Zn(2+). The active site involves D70. D92 provides a ligand contact to Zn(2+). The Proton acceptor role is filled by E122. Residues E123, E146, and H317 each coordinate Zn(2+).

The protein belongs to the peptidase M20A family. LysK subfamily. Zn(2+) serves as cofactor. It depends on Co(2+) as a cofactor.

Its subcellular location is the cytoplasm. It catalyses the reaction [amino-group carrier protein]-C-terminal-gamma-(L-lysyl)-L-glutamate + H2O = [amino-group carrier protein]-C-terminal-L-glutamate + L-lysine. It carries out the reaction [amino-group carrier protein]-C-terminal-gamma-(L-ornithyl)-L-glutamate + H2O = [amino-group carrier protein]-C-terminal-L-glutamate + L-ornithine. It participates in amino-acid biosynthesis; L-lysine biosynthesis via AAA pathway; L-lysine from L-alpha-aminoadipate (Thermus route): step 5/5. It functions in the pathway amino-acid biosynthesis; L-arginine biosynthesis. Catalyzes the release of L-lysine from [LysW]-gamma-L-lysine and the release of L-ornithine from [LysW]-L-ornithine. The sequence is that of [LysW]-lysine/[LysW]-ornithine hydrolase from Saccharolobus islandicus (strain M.16.27) (Sulfolobus islandicus).